We begin with the raw amino-acid sequence, 1298 residues long: Phosphoribosylformylglycinamidine synthase (1298 aa).

The tract at residues 303–327 is disordered; that stretch reads FPGAATGSGGEIRDEGATGRGAKPK. ATP is bound by residues 305–316, 384–386, and Ala676; these read GAATGSGGEIRD and TGY. Residues Asp677, Glu716, Asn720, and Asp884 each contribute to the Mg(2+) site. Ser886 lines the ATP pocket. A Glutamine amidotransferase type-1 domain is found at 1045-1298; the sequence is VAVLREQGVN…MFRNARAWVN (254 aa). The Nucleophile role is filled by Cys1138. Residues His1263 and Glu1265 contribute to the active site.

The protein in the N-terminal section; belongs to the FGAMS family. As to quaternary structure, monomer.

The protein resides in the cytoplasm. The enzyme catalyses N(2)-formyl-N(1)-(5-phospho-beta-D-ribosyl)glycinamide + L-glutamine + ATP + H2O = 2-formamido-N(1)-(5-O-phospho-beta-D-ribosyl)acetamidine + L-glutamate + ADP + phosphate + H(+). The protein operates within purine metabolism; IMP biosynthesis via de novo pathway; 5-amino-1-(5-phospho-D-ribosyl)imidazole from N(2)-formyl-N(1)-(5-phospho-D-ribosyl)glycinamide: step 1/2. Phosphoribosylformylglycinamidine synthase involved in the purines biosynthetic pathway. Catalyzes the ATP-dependent conversion of formylglycinamide ribonucleotide (FGAR) and glutamine to yield formylglycinamidine ribonucleotide (FGAM) and glutamate. The sequence is that of Phosphoribosylformylglycinamidine synthase from Pseudomonas syringae pv. syringae (strain B728a).